The following is an 887-amino-acid chain: Degenerin-like protein unc-105 (887 aa).

Positions 1–33 (MAEDRIKSKLRRPASIESTMSSRTKPRHKPSPM) are disordered. At 1-93 (MAEDRIKSKL…AATADGKWRW (93 aa)) the chain is on the cytoplasmic side. A helical membrane pass occupies residues 94 to 114 (FWYTAFTICLLALLIQIFFLI). The Extracellular portion of the chain corresponds to 115–698 (SKYRQYGKTV…SVLADLGGLT (584 aa)). 5 N-linked (GlcNAc...) asparagine glycosylation sites follow: asparagine 244, asparagine 450, asparagine 473, asparagine 581, and asparagine 599. A helical membrane pass occupies residues 699–719 (GLWIGASVVSLLEIVTLIVFA). At 720–887 (TQAYVRKRKG…YSAPYEHRKK (168 aa)) the chain is on the cytoplasmic side. 2 disordered regions span residues 794 to 815 (AIQE…NGSC) and 859 to 887 (SNSE…HRKK).

This sequence belongs to the amiloride-sensitive sodium channel (TC 1.A.6) family. Expressed in body wall muscle.

The protein localises to the membrane. Functionally, ion channel which is permeable to small monovalent cations. Shown not to be H+-ion gated. May be mechanosensitive and is required for growth and muscle development. The polypeptide is Degenerin-like protein unc-105 (unc-105) (Caenorhabditis elegans).